The sequence spans 226 residues: Protein transport protein sec20 (226 aa).

The Cytoplasmic portion of the chain corresponds to 1-189; sequence MADVLNALEE…IKSLKLSDRS (189 aa). Residues 53-75 adopt a coiled-coil conformation; that stretch reads LRYEKAVQEYIRLNRRYRNKIAS. Position 97 is a phosphoserine (Ser-97). The chain crosses the membrane as a helical; Anchor for type IV membrane protein span at residues 190–210; that stretch reads DYFLVVSGFGFFIFVVVYLLF. At 211-226 the chain is on the lumenal side; that stretch reads KRIVWPILSMFLWFLR.

Belongs to the SEC20 family. In terms of assembly, component of a SNARE complex consisting of ufe1, sec20, sec22 and use1. Interacts with tip20 through its cytoplasmic domain.

It localises to the endoplasmic reticulum membrane. In terms of biological role, SNARE required for targeting and fusion of Golgi-derived retrograde transport vesicles with the ER. The polypeptide is Protein transport protein sec20 (Schizosaccharomyces pombe (strain 972 / ATCC 24843) (Fission yeast)).